Here is a 232-residue protein sequence, read N- to C-terminus: VIGGDECDINEHPFLAFMYYSPQYFCGMTLINQEWVLTAAHCDKTYMRIYLGIHTRSVANDDEVIRYPKEKFICPNKKKNVITDKDIMLIRLNRPVKNSTHIAPISLPSNPPSVGSVCRIMGWGAITTSEDTYPDVPHCANINLFNNTVCREAYNGLPAKTLCAGVLQGGIDTCGGDSGGPLICNGQFQGILSWGSDPCAEPRKPAFYTKVFDYLPWIQSIIAGNKTATCPP.

The 223-residue stretch at 1 to 223 (VIGGDECDIN…YLPWIQSIIA (223 aa)) folds into the Peptidase S1 domain. Cystine bridges form between Cys-7/Cys-139, Cys-26/Cys-42, Cys-74/Cys-230, Cys-118/Cys-184, Cys-150/Cys-163, and Cys-174/Cys-199. Active-site charge relay system residues include His-41 and Asp-86. Asn-98 and Asn-146 each carry an N-linked (GlcNAc...) asparagine glycan. The Charge relay system role is filled by Ser-178. An N-linked (GlcNAc...) asparagine glycan is attached at Asn-225.

It belongs to the peptidase S1 family. Snake venom subfamily. As to quaternary structure, monomer. Expressed by the venom gland.

The protein localises to the secreted. It carries out the reaction Selective cleavage of Arg-|-Xaa bond in fibrinogen, to form fibrin, and release fibrinopeptide A. The specificity of further degradation of fibrinogen varies with species origin of the enzyme.. Inhibited by diisopropylfluorophosphate (DFP), but not by hirudin. In terms of biological role, thrombin-like snake venom serine protease that clots fibrinogen by releasing fibrinopeptide A from the alpha chain of fibrinogen (FGA), induces platelet aggregation through its interaction with GPIb (GP1BA/GP1BB), and activates factor VIII (F8). This Bothrops jararaca (Jararaca) protein is Thrombin-like enzyme bothrombin.